Here is a 648-residue protein sequence, read N- to C-terminus: Golgin subfamily A member 8G (648 aa).

The segment covering Met-1–Pro-11 has biased composition (pro residues). Disordered regions lie at residues Met-1 to Leu-84 and Asn-119 to Ala-139. Polar residues predominate over residues Thr-50 to Gly-62. Coiled coils occupy residues Val-105–Asp-160, Leu-223–Glu-275, and Glu-318–Gln-424. Over residues Gln-121 to Ala-139 the composition is skewed to basic and acidic residues. Disordered regions lie at residues Leu-356–Arg-376, Ala-434–Gln-461, Pro-508–Ala-549, and Pro-600–Gln-624. Residues Gly-441 to Pro-453 show a composition bias toward basic and acidic residues. The segment covering Pro-521 to Gly-534 has biased composition (gly residues).

Belongs to the GOLGA8 family.

The protein is Golgin subfamily A member 8G of Homo sapiens (Human).